Consider the following 368-residue polypeptide: Zinc finger protein 24 (368 aa).

K22 is covalently cross-linked (Glycyl lysine isopeptide (Lys-Gly) (interchain with G-Cter in SUMO2)). K27 participates in a covalent cross-link: Glycyl lysine isopeptide (Lys-Gly) (interchain with G-Cter in SUMO1); alternate. K27 participates in a covalent cross-link: Glycyl lysine isopeptide (Lys-Gly) (interchain with G-Cter in SUMO2); alternate. The region spanning 52 to 134 (RQRFRQFGYQ…TVLEDLESEL (83 aa)) is the SCAN box domain. Phosphoserine occurs at positions 132 and 142. Glycyl lysine isopeptide (Lys-Gly) (interchain with G-Cter in SUMO2) cross-links involve residues K147, K177, and K236. The C2H2-type 1 zinc-finger motif lies at 251 to 273 (HICDECGKHFSQGSALILHQRIH). The interval 251–301 (HICDECGKHFSQGSALILHQRIHSGEKPYGCVECGKAFSRSSILVQHQRVH) is necessary and sufficient for nuclear localization. S274 carries the post-translational modification Phosphoserine. Residues K277 and K286 each participate in a glycyl lysine isopeptide (Lys-Gly) (interchain with G-Cter in SUMO2) cross-link. 3 consecutive C2H2-type zinc fingers follow at residues 279-301 (YGCV…QRVH), 307-329 (YKCL…QRIH), and 335-357 (YECV…QRRH). S292 carries the phosphoserine modification. Y335 carries the phosphotyrosine modification. Glycyl lysine isopeptide (Lys-Gly) (interchain with G-Cter in SUMO2) cross-links involve residues K361 and K367.

The protein belongs to the krueppel C2H2-type zinc-finger protein family. Sumoylated.

It localises to the nucleus. In terms of biological role, transcription factor required for myelination of differentiated oligodendrocytes. Required for the conversion of oligodendrocytes from the premyelinating to the myelinating state. In the developing central nervous system (CNS), involved in the maintenance in the progenitor stage by promoting the cell cycle. Specifically binds to the 5'-TCAT-3' DNA sequence. Has transcription repressor activity in vitro. This is Zinc finger protein 24 (Znf24) from Rattus norvegicus (Rat).